We begin with the raw amino-acid sequence, 128 residues long: 3-aminoacrylate deaminase RutC (128 aa).

Belongs to the RutC family.

The catalysed reaction is (Z)-3-aminoacrylate + H2O + H(+) = 3-oxopropanoate + NH4(+). In terms of biological role, involved in pyrimidine catabolism. Catalyzes the deamination of 3-aminoacrylate to malonic semialdehyde, a reaction that can also occur spontaneously. RutC may facilitate the reaction and modulate the metabolic fitness, rather than catalyzing essential functions. This Serratia proteamaculans (strain 568) protein is 3-aminoacrylate deaminase RutC.